Reading from the N-terminus, the 64-residue chain is Large ribosomal subunit protein eL37 (64 aa).

A C4-type zinc finger spans residues 1–6 (GRCSAC). Zn(2+) contacts are provided by cysteine 3 and cysteine 6.

It belongs to the eukaryotic ribosomal protein eL37 family. Requires Zn(2+) as cofactor.

Its function is as follows. Binds to the 23S rRNA. This chain is Large ribosomal subunit protein eL37 (RPL37), found in Solanum lycopersicum (Tomato).